The chain runs to 351 residues: Very-long-chain 3-oxoacyl-CoA reductase (351 aa).

The helical transmembrane segment at 26-46 threads the bilayer; sequence LLWCAFTVGAVKLTTFMLSLI. 7 residues coordinate NADP(+): L72, D126, N153, Y225, K229, V258, and S260. Residue Y225 is the Proton donor of the active site. The active-site Lowers pKa of active site Tyr is K229.

This sequence belongs to the short-chain dehydrogenases/reductases (SDR) family.

The protein localises to the endoplasmic reticulum membrane. It carries out the reaction a very-long-chain (3R)-3-hydroxyacyl-CoA + NADP(+) = a very-long-chain 3-oxoacyl-CoA + NADPH + H(+). Its pathway is lipid metabolism; fatty acid biosynthesis. In terms of biological role, component of the microsomal membrane bound fatty acid elongation system, which produces the 26-carbon very long-chain fatty acids (VLCFA) from palmitate. Catalyzes the reduction of the 3-ketoacyl-CoA intermediate that is formed in each cycle of fatty acid elongation. VLCFAs serve as precursors for ceramide and sphingolipids. This chain is Very-long-chain 3-oxoacyl-CoA reductase, found in Eremothecium gossypii (strain ATCC 10895 / CBS 109.51 / FGSC 9923 / NRRL Y-1056) (Yeast).